A 57-amino-acid chain; its full sequence is uncharacterized protein (57 aa).

Positions 1 to 24 (MYDTWFVLTAVVLFVLVLIGNVHG) are cleaved as a signal peptide.

As to expression, prismatic layer of shell (at protein level).

The protein resides in the secreted. This is an uncharacterized protein from Margaritifera margaritifera (Freshwater pearl mussel).